The primary structure comprises 723 residues: Solute carrier organic anion transporter family member 4A1 (723 aa).

Topologically, residues 1–102 (MPQHAMGDTH…KCLQVFNTPK (102 aa)) are cytoplasmic. A disordered region spans residues 23-64 (SSATDSGCDTPPSSRASPASLRSAHGTLGSSSQPLFEPQAEK). The segment covering 33 to 46 (PPSSRASPASLRSA) has biased composition (low complexity). A phosphoserine mark is found at serine 39, serine 42, and serine 45. A helical transmembrane segment spans residues 103–123 (GFLFFLCAASFLQGMTVNGFI). The Extracellular segment spans residues 124–142 (NTVITSIERRFDLHSYQSG). A helical membrane pass occupies residues 143 to 163 (LIASSYDIAACLCLTFVSYFG). Residues 164 to 169 (GNGHKP) lie on the Cytoplasmic side of the membrane. The chain crosses the membrane as a helical span at residues 170 to 194 (RWLGWGVLVLGIGSLVFALPHFTAG). The Extracellular portion of the chain corresponds to 195-224 (RYEVEMDEGLGTGTCLTNQSHVECKDSASG). A glycan (N-linked (GlcNAc...) asparagine) is linked at asparagine 212. The helical transmembrane segment at 225–255 (LSNYRLIFMLGQLLHGVGATPLYTLGVTYLD) threads the bilayer. The Cytoplasmic portion of the chain corresponds to 256-274 (ENVKSSYSPIYIAIFYTAA). Residues 275–295 (ILGPAAGYLIGGAMLNVYTEV) traverse the membrane as a helical segment. Residues 296-309 (GQRTELTTDSPLWV) lie on the Extracellular side of the membrane. The helical transmembrane segment at 310–334 (GAWWIGFLGTGIAAFLIAIPILGYP) threads the bilayer. Over 335–380 (RQLPGSQRYVVMRAAETQQLKDHSRGAVSNPAFGKTVRDLPLSIWL) the chain is Cytoplasmic. The helical transmembrane segment at 381–402 (LLRNPTFILLCLAGATEATLIA) threads the bilayer. At 403–422 (GMSTFGPKFFEAQFSLSASE) the chain is on the extracellular side. The helical transmembrane segment at 423 to 446 (AATLFGYLVVPAGGGGTLLGGFLV) threads the bilayer. Topologically, residues 447–450 (NKFK) are cytoplasmic. The helical transmembrane segment at 451–473 (LRGSGIIRFCLFCTLTSLLAFFV) threads the bilayer. Topologically, residues 474–582 (FLMHCPNVHM…ASTCQSKPFL (109 aa)) are extracellular. Residues 500–557 (LDLKAACNAIYCCQPKHYSPLCGSDGTMYYSPCYAGCPADAETDLGGQKVYRGCSCIL) form the Kazal-like domain. Cystine bridges form between cysteine 506–cysteine 536 and cysteine 521–cysteine 555. N-linked (GlcNAc...) asparagine glycosylation occurs at asparagine 566. The helical transmembrane segment at 583–605 (LVLVFVVIIFTFLSSIPALTATL) threads the bilayer. At 606 to 614 (RCVSDRQRS) the chain is on the cytoplasmic side. The chain crosses the membrane as a helical span at residues 615 to 640 (FALGIQWIVVRTLGSIPGPIAFGWVI). Residues 641 to 673 (DKACLLWQDQCGHQGSCFVYENEAMSRYMLIAG) lie on the Extracellular side of the membrane. The helical transmembrane segment at 674–691 (LTFKVLGFLFFVAAYFLY) threads the bilayer. Topologically, residues 692–723 (KSPSVSSDGLEASLPSQSSASDSPTEQLQSNV) are cytoplasmic. The segment at 700 to 723 (GLEASLPSQSSASDSPTEQLQSNV) is disordered. The span at 701-723 (LEASLPSQSSASDSPTEQLQSNV) shows a compositional bias: low complexity.

The protein belongs to the organo anion transporter (TC 2.A.60) family.

Its subcellular location is the cell membrane. It carries out the reaction 3,3',5-triiodo-L-thyronine(out) + L-glutamate(in) = 3,3',5-triiodo-L-thyronine(in) + L-glutamate(out). The catalysed reaction is L-thyroxine(out) + L-glutamate(in) = L-thyroxine(in) + L-glutamate(out). The enzyme catalyses estrone 3-sulfate(out) + L-glutamate(in) = estrone 3-sulfate(in) + L-glutamate(out). It catalyses the reaction taurocholate(out) + L-glutamate(in) = taurocholate(in) + L-glutamate(out). It carries out the reaction 3,3',5-triiodo-L-thyronine(out) = 3,3',5-triiodo-L-thyronine(in). The catalysed reaction is L-thyroxine(out) = L-thyroxine(in). The enzyme catalyses 3,3',5'-triiodo-L-thyronine(out) = 3,3',5'-triiodo-L-thyronine(in). It catalyses the reaction estrone 3-sulfate(out) = estrone 3-sulfate(in). It carries out the reaction 17beta-estradiol 17-O-(beta-D-glucuronate)(out) = 17beta-estradiol 17-O-(beta-D-glucuronate)(in). The catalysed reaction is taurocholate(out) = taurocholate(in). The enzyme catalyses prostaglandin E2(out) = prostaglandin E2(in). Functionally, organic anion antiporter with apparent broad substrate specificity. Recognizes various substrates including thyroid hormones 3,3',5-triiodo-L-thyronine (T3), L-thyroxine (T4) and 3,3',5'-triiodo-L-thyronine (rT3), conjugated steroids such as estrone 3-sulfate and estradiol 17-beta glucuronide, bile acids such as taurocholate and prostanoids such as prostaglandin E2, likely operating in a tissue-specific manner. May be involved in uptake of metabolites from the circulation into organs such as kidney, liver or placenta. Possibly drives the selective transport of thyroid hormones and estrogens coupled to an outward glutamate gradient across the microvillous membrane of the placenta. The transport mechanism, its electrogenicity and potential tissue-specific counterions remain to be elucidated. The polypeptide is Solute carrier organic anion transporter family member 4A1 (Slco4a1) (Mus musculus (Mouse)).